A 422-amino-acid polypeptide reads, in one-letter code: Protein MANNAN SYNTHESIS-RELATED 1 (422 aa).

The Cytoplasmic portion of the chain corresponds to 1–6; the sequence is MGVDLR. Residues 7 to 26 form a helical; Signal-anchor for type II membrane protein membrane-spanning segment; that stretch reads QVVAGILTITMFVMLGQMLH. The Lumenal portion of the chain corresponds to 27-422; sequence RDYFDSLQEK…KNHLAYSCFC (396 aa). Substrate is bound at residue 263–265; the sequence is DLR.

The protein belongs to the glycosyltransferase GT106 family. As to expression, widely expressed.

The protein resides in the golgi apparatus membrane. Its pathway is glycan biosynthesis. Functionally, glycosyltransferase involved in mannan biosynthesis. In Arabidopsis thaliana (Mouse-ear cress), this protein is Protein MANNAN SYNTHESIS-RELATED 1.